A 556-amino-acid polypeptide reads, in one-letter code: TNF receptor-associated factor 6-B (556 aa).

An RING-type; degenerate zinc finger spans residues 72-111 (CPICLMALREAVQTPCGHRFCKACIVKSLRDAGHKCPVDN). 2 TRAF-type zinc fingers span residues 152 to 204 (RHLG…EDMS) and 205 to 261 (GHEL…NDLA). Residues 318–356 (SHQDCSQETRNLRETIEQLEGRLVRQDHQIRELIAKMET) adopt a coiled-coil conformation. Residues 384–533 (NGVFIWKIKG…NDTLFVRCAV (150 aa)) form the MATH domain.

It belongs to the TNF receptor-associated factor family. A subfamily. Homotrimer. Homooligomer.

Its subcellular location is the cytoplasm. It localises to the cell cortex. It is found in the nucleus. The protein resides in the lipid droplet. It catalyses the reaction S-ubiquitinyl-[E2 ubiquitin-conjugating enzyme]-L-cysteine + [acceptor protein]-L-lysine = [E2 ubiquitin-conjugating enzyme]-L-cysteine + N(6)-ubiquitinyl-[acceptor protein]-L-lysine.. It participates in protein modification; protein ubiquitination. Its function is as follows. E3 ubiquitin ligase that, together with UBE2N and UBE2V1, mediates the synthesis of 'Lys-63'-linked-polyubiquitin chains conjugated to proteins, such as IKBKG, IRAK1, AKT1 and AKT2. Also mediates ubiquitination of free/unanchored polyubiquitin chain that leads to MAP3K7 activation. This Xenopus laevis (African clawed frog) protein is TNF receptor-associated factor 6-B (traf6-b).